We begin with the raw amino-acid sequence, 433 residues long: Glutamate-1-semialdehyde 2,1-aminomutase (433 aa).

N6-(pyridoxal phosphate)lysine is present on lysine 272.

Belongs to the class-III pyridoxal-phosphate-dependent aminotransferase family. HemL subfamily. In terms of assembly, homodimer. Pyridoxal 5'-phosphate is required as a cofactor.

The protein localises to the cytoplasm. The catalysed reaction is (S)-4-amino-5-oxopentanoate = 5-aminolevulinate. Its pathway is porphyrin-containing compound metabolism; protoporphyrin-IX biosynthesis; 5-aminolevulinate from L-glutamyl-tRNA(Glu): step 2/2. This is Glutamate-1-semialdehyde 2,1-aminomutase from Methylacidiphilum infernorum (isolate V4) (Methylokorus infernorum (strain V4)).